The following is a 115-amino-acid chain: Protein TrbA (115 aa).

Transmembrane regions (helical) follow at residues 5-25 (YLKM…GYFF), 39-59 (LVFL…LWFL), 60-80 (CGAI…AALP), and 91-111 (IFIC…FIRG).

The protein localises to the cell membrane. The polypeptide is Protein TrbA (trbA) (Escherichia coli (strain K12)).